The chain runs to 130 residues: L-aspartate semialdehyde sulfurtransferase iron-sulfur subunit (130 aa).

2 4Fe-4S ferredoxin-type domains span residues 72 to 101 (RPIHRDEEECVECGACISVCPMNVYSFDET) and 102 to 130 (WSLCVDEKKCIQCGMCIKMCPHGALKLGE). Cys-81, Cys-84, Cys-87, Cys-91, Cys-111, Cys-114, Cys-117, and Cys-121 together coordinate [4Fe-4S] cluster.

May form a complex with MA_1821. It depends on [4Fe-4S] cluster as a cofactor.

It participates in amino-acid biosynthesis. Its function is as follows. Required for O-acetylhomoserine sulfhydrylase (OAHS)-independent homocysteine (Hcy) biosynthesis. Together with MA_1821, catalyzes the condensation of sulfide with aspartate semialdehyde to generate homocysteine. May be involved in the reduction of the disulfide formed in MA_1821. In Methanosarcina acetivorans (strain ATCC 35395 / DSM 2834 / JCM 12185 / C2A), this protein is L-aspartate semialdehyde sulfurtransferase iron-sulfur subunit.